A 273-amino-acid chain; its full sequence is Shikimate dehydrogenase (NADP(+)) (273 aa).

Residues 14–16 (SLS) and T59 contribute to the shikimate site. Catalysis depends on K63, which acts as the Proton acceptor. Residues N84 and D99 each coordinate shikimate. Residues 122–126 (GAGGA) and M212 contribute to the NADP(+) site. Y214 provides a ligand contact to shikimate. G235 contacts NADP(+).

It belongs to the shikimate dehydrogenase family. In terms of assembly, homodimer.

The catalysed reaction is shikimate + NADP(+) = 3-dehydroshikimate + NADPH + H(+). Its pathway is metabolic intermediate biosynthesis; chorismate biosynthesis; chorismate from D-erythrose 4-phosphate and phosphoenolpyruvate: step 4/7. Its function is as follows. Involved in the biosynthesis of the chorismate, which leads to the biosynthesis of aromatic amino acids. Catalyzes the reversible NADPH linked reduction of 3-dehydroshikimate (DHSA) to yield shikimate (SA). This Aeropyrum pernix (strain ATCC 700893 / DSM 11879 / JCM 9820 / NBRC 100138 / K1) protein is Shikimate dehydrogenase (NADP(+)).